The sequence spans 1116 residues: MVNNTFITKLPDFLEIQRSSFCWFLLKGLSYELNSLSPIIDVNVKRVKLKLYPQEFVLKPGRTTPICAKQNDSTYGVRIFLPAEVIYCDTESKYPTKKNRLEDIKEKVFIGQIPLMTSTGSFIVNGCEGYRNQIIRCPGLYYKAEFLNNNIVSTVTIIAQRGSWLKFEFDKNGYWVRIDKEKKISIFDFLEGLNINDEEILSGLKSIAPLLKYKKTQEILKRNNDPDLKNLIEKITDPNSYSLGIIGRLNLNRRLGLNISTRVHTLTIHDIFGIIDFFLSARSFVPDDIDDLRNRRIRAVGELITSQCEIGLNRLERNILERTNFSGSVRILPKTLVNARPIMSAIQEFFNSSQLSHYMDQTNLLSETANKRRISALGPGGLNADRVTVAARDIHPTQYGRLCPIETPEGQNVGLVSTLASYARINRNGFIQTPYFRVENGKILTQQPLIYLTAEQENLKIAPADVKRDQDGYLVDDFIVTRFQSKNFIITPSKLVDFISVSEIQIISVAASLIPFLEHDDANRALMGANMQRQAVPLLYPRKPIVGTGIESQVAFDSRLVNIATKPGIVKYVSSQQIDIKNIEGEKIAYKLIKYRPSNQDTCLNQRPLVWVGQSIKTGQVIADGPGTQSGELALGQNLTVAYMPWQGYNYEDAILVSDKLDIQNLFTSIHIEECETEVQQTKTGEQVITSDIPLVSEKNCKNLDENGIIKVGKYVYPGDILVGKITPKGEIDQLPEAKLLKAIFGFKTPDMRDSSLRVPGGLSGRVLDIKIFKKPKPGKVFGVGSKIRVFIAQISKLQVGDKIAGRHGNKGVISRILPHQDMPFLPDGTSVDIILNPLGVPSRMNVGQIFECLLGLAGDQLNKRFKILPFDEMYQNEASRILINQKLKDAAKKQNKPWLFSAYSPGKILLSDGRTGEKFDNPVLVGRSYILKLAHLVEDKIHARSTGPYSLITQQPVGGKSQNGGQRFGEMEVWALEAFGAAYTLQELLTIKSDDMQGRDDVLNSIVCGQEIPKSSIPESFKVLMRELNALGLDITTYKVMFENETNKNCLIKNEINLMQTYEEGIKAKIREEEKEREKEREAREMEDPEKIVSKIDAKQKKKYKKTKKQTEKKK.

A compositionally biased stretch (basic and acidic residues) spans 1070 to 1100 (KIREEEKEREKEREAREMEDPEKIVSKIDAK). A disordered region spans residues 1070 to 1116 (KIREEEKEREKEREAREMEDPEKIVSKIDAKQKKKYKKTKKQTEKKK). The segment covering 1101 to 1116 (QKKKYKKTKKQTEKKK) has biased composition (basic residues).

It belongs to the RNA polymerase beta chain family. As to quaternary structure, in plastids the minimal PEP RNA polymerase catalytic core is composed of four subunits: alpha, beta, beta', and beta''. When a (nuclear-encoded) sigma factor is associated with the core the holoenzyme is formed, which can initiate transcription.

The protein localises to the plastid. It localises to the chloroplast. The enzyme catalyses RNA(n) + a ribonucleoside 5'-triphosphate = RNA(n+1) + diphosphate. In terms of biological role, DNA-dependent RNA polymerase catalyzes the transcription of DNA into RNA using the four ribonucleoside triphosphates as substrates. The chain is DNA-directed RNA polymerase subunit beta from Heterosigma akashiwo (Chromophytic alga).